Reading from the N-terminus, the 332-residue chain is Adenosine deaminase (332 aa).

Residues H12 and H14 each contribute to the Zn(2+) site. The substrate site is built by H14, D16, and G170. H197 lines the Zn(2+) pocket. The active-site Proton donor is E200. D278 serves as a coordination point for Zn(2+).

Belongs to the metallo-dependent hydrolases superfamily. Adenosine and AMP deaminases family. Adenosine deaminase subfamily. Zn(2+) is required as a cofactor.

The enzyme catalyses adenosine + H2O + H(+) = inosine + NH4(+). The catalysed reaction is 2'-deoxyadenosine + H2O + H(+) = 2'-deoxyinosine + NH4(+). Functionally, catalyzes the hydrolytic deamination of adenosine and 2-deoxyadenosine. The sequence is that of Adenosine deaminase from Clostridium perfringens (strain 13 / Type A).